Reading from the N-terminus, the 314-residue chain is Polyamine aminopropyltransferase (314 aa).

Positions 13–249 (WSWFLEWLTP…SMWGFVVASD (237 aa)) constitute a PABS domain. An S-methyl-5'-thioadenosine-binding site is contributed by Q42. Positions 73 and 97 each coordinate spermidine. S-methyl-5'-thioadenosine contacts are provided by residues D117 and 149-150 (DA). The active-site Proton acceptor is the D168. P177 is a binding site for S-methyl-5'-thioadenosine.

The protein belongs to the spermidine/spermine synthase family. In terms of assembly, homodimer or homotetramer.

It is found in the cytoplasm. The catalysed reaction is S-adenosyl 3-(methylsulfanyl)propylamine + putrescine = S-methyl-5'-thioadenosine + spermidine + H(+). Its pathway is amine and polyamine biosynthesis; spermidine biosynthesis; spermidine from putrescine: step 1/1. In terms of biological role, catalyzes the irreversible transfer of a propylamine group from the amino donor S-adenosylmethioninamine (decarboxy-AdoMet) to putrescine (1,4-diaminobutane) to yield spermidine. In Aeropyrum pernix (strain ATCC 700893 / DSM 11879 / JCM 9820 / NBRC 100138 / K1), this protein is Polyamine aminopropyltransferase.